The following is a 355-amino-acid chain: MFTLSDFDFNLPPELIAQTALPDRTASRLLEVDGSVAPARLVDRHFAELPSCIAPGDLLVFNDTKVLKARFFGQKASGGKIEVLIERVTGTHTALAQIRASKSPGAGTTLRLADAFDVTVGERVEPFFTLHFPAPCLDLIEQHGRLPLPPYIEHDADATDETRYQTVYASNPGAVAAPTAGLHFDQPLLEKLDAMGVERATLTLHVGAGTFQPVRVENIAEHKMHSEWYDLPQSLVDKIAATRARGGNVIAVGTTSMRALEAAARSADEAGRPLAATQAETDIFITPGYRFRVVDRLVTNFHLPKSTLLMLVSAFAGVETIRAAYRHAIEERYRFFSYGDAMLLTRRDTPEAPGA.

It belongs to the QueA family. In terms of assembly, monomer.

Its subcellular location is the cytoplasm. The enzyme catalyses 7-aminomethyl-7-carbaguanosine(34) in tRNA + S-adenosyl-L-methionine = epoxyqueuosine(34) in tRNA + adenine + L-methionine + 2 H(+). Its pathway is tRNA modification; tRNA-queuosine biosynthesis. Its function is as follows. Transfers and isomerizes the ribose moiety from AdoMet to the 7-aminomethyl group of 7-deazaguanine (preQ1-tRNA) to give epoxyqueuosine (oQ-tRNA). The chain is S-adenosylmethionine:tRNA ribosyltransferase-isomerase from Burkholderia orbicola (strain MC0-3).